Here is a 412-residue protein sequence, read N- to C-terminus: MKAARFVMRSARSLSSAGLVPREVEHFSRYSPSPLSMKQLLDFGSENACERTSSAFLRQELPVRLANILKEIDILPDRLVNTSSVQLVKSWYIQSLMELVEFHERSPDDQKVLSDFVDTLITVRNRHHNVVPTMAQGIIEYKDSCTVDPVTNQNLQYFLDRFYMNRISTRMLMNQHILIFSDSQTGNPSHIGSIDPNCNVAAVVQDAFECSRMLCDQYYLTSPELKLTQVNGKFPGEPIHIVYVPSHLHHMLFELFKNAMRATVEHQENEPSLTPVEVTVVLGKEDLTIKISDRGGGVPLRITDRLFSYMYSTAPTPVMDNSRNAPLAGFGYGLPISRLYAKYFQGDLHLYSLSGYGTDAIIYLKALSSESVEKLPVFNKSAFKHYQMSIEADDWCIPSKEPKNLAKEKVAV.

The Histidine kinase domain occupies 138–368 (IIEYKDSCTV…DAIIYLKALS (231 aa)). ATP-binding positions include 254–261 (ELFKNAMR), Asp293, 312–313 (ST), and 329–334 (GFGYGL).

Belongs to the PDK/BCKDK protein kinase family. As to quaternary structure, homodimer. Interacts with the pyruvate dehydrogenase complex subunit DLAT, and is part of the multimeric pyruvate dehydrogenase complex that contains multiple copies of pyruvate dehydrogenase (E1), dihydrolipoamide acetyltransferase (DLAT, E2) and lipoamide dehydrogenase (DLD, E3). Detected in heart, white adipose tissue and muscle.

It localises to the mitochondrion matrix. The catalysed reaction is L-seryl-[pyruvate dehydrogenase E1 alpha subunit] + ATP = O-phospho-L-seryl-[pyruvate dehydrogenase E1 alpha subunit] + ADP + H(+). In terms of biological role, kinase that plays a key role in regulation of glucose and fatty acid metabolism and homeostasis via phosphorylation of the pyruvate dehydrogenase subunits PDHA1 and PDHA2. This inhibits pyruvate dehydrogenase activity, and thereby regulates metabolite flux through the tricarboxylic acid cycle, down-regulates aerobic respiration and inhibits the formation of acetyl-coenzyme A from pyruvate. Inhibition of pyruvate dehydrogenase decreases glucose utilization and increases fat metabolism in response to prolonged fasting and starvation. Plays an important role in maintaining normal blood glucose levels under starvation, and is involved in the insulin signaling cascade. Via its regulation of pyruvate dehydrogenase activity, plays an important role in maintaining normal blood pH and in preventing the accumulation of ketone bodies under starvation. In the fed state, mediates cellular responses to glucose levels and to a high-fat diet. Regulates both fatty acid oxidation and de novo fatty acid biosynthesis. Plays a role in the generation of reactive oxygen species. Protects detached epithelial cells against anoikis. Plays a role in cell proliferation via its role in regulating carbohydrate and fatty acid metabolism. This is [Pyruvate dehydrogenase (acetyl-transferring)] kinase isozyme 4, mitochondrial (PDK4) from Rhinolophus ferrumequinum (Greater horseshoe bat).